The chain runs to 141 residues: Oleosin 14.9 kDa (141 aa).

The span at 1-22 (MADQTRTHHEMISRDSTQEAHP) shows a compositional bias: basic and acidic residues. Residues 1–24 (MADQTRTHHEMISRDSTQEAHPKA) form a disordered region. Residues 1–29 (MADQTRTHHEMISRDSTQEAHPKARQMVK) form a polar region. Residues 30–141 (AATAVTAGGS…NIGVQHQQVS (112 aa)) form a hydrophobic region. The next 3 membrane-spanning stretches (helical) occupy residues 38–58 (GSLL…LTVA), 60–80 (PLLV…ALII), and 81–101 (TGFL…SWLY).

This sequence belongs to the oleosin family.

The protein resides in the lipid droplet. It localises to the membrane. In terms of biological role, may have a structural role to stabilize the lipid body during desiccation of the seed by preventing coalescence of the oil. Probably interacts with both lipid and phospholipid moieties of lipid bodies. May also provide recognition signals for specific lipase anchorage in lipolysis during seedling growth. In Arabidopsis thaliana (Mouse-ear cress), this protein is Oleosin 14.9 kDa (OL3).